The chain runs to 1773 residues: MLFIESAFLVLTSLSAAEAATPFEGGVKQKVFHSAGHIDDFIVSRDQQTIYIASINRITSLHSSNLSIQNEVSIGPVQDSPWCSADGKSCLKDNRPFSTDVHTKILQILPSGQLLQCGSVKLGSCSTFNSKLSLITEASTPVAANSPDASTVSQIIDNRLVVAASPTKESPGCNPNLPGLNVENAGDLEGEAAVYLRAAYRSSFRFVTTFSHQHFIFVVATVTPRETRLPVTTRLIRFCKNDTKFVSYSEIELQCRGEDNTNYPFLTAVVQTGDKLIASFSASPTSSKNSICVFSMQKVKLTFWYNVDRCRSGTDSIKLSHIGRDTKCVNKAHIPLDEDSCELGVGGSIELVEMSTIDVLAKVTSLMAVDQKALFAGTSSSQIVMLKWDEQNSNKLEEYGRKEIGDGRTGSEVVKMTRFGDFILVQMPYGIVMEELSTCAHHESCTDCQVSVDPLCQWCHPTQSCTTSSRCSGPLTTQCPIVDGDPIPSMVSVNSSTSISFNIHHLPPPVGFVYKCYFGSKSHSKSTKATWTASGISCPSEMFGSPKTFEISLMTSISKNPISRHNFTVFDCAGYSTCSTCMSSEFGCQWCSHKCSSSCGSASAKACVKIQPMKVPIAIGSQQEIVLEALNLDTLDRKTEHFCKVNGQVAPAKIASDSIRCGKIQLAGSNETNANMVVPLSLMANDVVVDIANVSLYSCSNLAADCSSCLALSPSLSCGWCNRKCSHECHESKATAVCDPPKIDRFEPSSGPVEGGTVIKVYGNDLGMSVEDVRGKIYVAGSRCNIVEYQVSNMIACQVDKGVSSGPIKISVGRATMAVAESSDLFSFVRVSIFSAYPLYGPISGGTRITLYGQNLSSGSRISVTVGGLPCPIERINSSTVLTCLTPSGSSIGKSAKVVVHVDHSQIQLDQPFEYRSDPSVNSIFPLSSFKAGGRIVSVQGSSFNTVQSARMFLISSPTPPFEIISDLAPCHIINSTLMTCMTPKILETITRRVEYTRQPVGFLMDNVTAVANLGRRIQMSVYPNPSLSPFKGIRYHQGEQSLILEGHNLNLAAEPNDFKIFVGSERCYVTLVDVRQLVCSGPLKQPKPTDERGVPINGDNPLVTVIVGSLRMELGLIEYSDHALPSRLSFLILGLLLFTVITLIVMCLIFKRRRQEREKEYRKIQLQMENLENNVRKECKQAFAELQTNLVLSPKSTGTITSPELIHFPHFVENLLWADQNLTSAPSLARTLPVTLAQFHALLSFKGFIFTIVEAAESDVSISTSEKSTLASLLISVLLRNFSYCTEIVVDLLKAHIARSVQAKRAELLFRNSDSVVEKMFSKWMSICLYSHLTPQMNSYFYLYKALQYQTDKGPVDAVTGDARYTINEAKLLRESVETKTLKIHIVPFEKCDETTHLEVHACDAICQLKQKVASAVYKETPYSQRPRITQFELKLKCAKRGDIKLTDVSAVETLSQKKLPVKLLTLADYGIQDGATLEMTSAVYTAESYRNSLADSGQSSWSSLDRCSPIYSSSKYYHLTNPSSGTMTFKKRTSPSEIPKSIPEVYLTRLLTSKGTVETYVEDFLESVLYMHDSSYPPILKFFFDILDREASINGVSENICQQWKANGYVLRMWTNFVKNPQLVFDVPHSVSMDANLSTVAQTMMDCFSFSEPVLGAHSPSSRLLFAKDVARLRPLSVDLFKRVKNSPPLGMEELRTELVNMANDVSTCKGSSLALSELLSWVRGNGIRISQLLSSNQETSQQRLPQKLSQVLHVCLETDNHIYSTISDYD.

The N-terminal stretch at 1–19 (MLFIESAFLVLTSLSAAEA) is a signal peptide. The Sema domain occupies 20–436 (ATPFEGGVKQ…MPYGIVMEEL (417 aa)). The Extracellular segment spans residues 20 to 1130 (ATPFEGGVKQ…SDHALPSRLS (1111 aa)). A glycan (N-linked (GlcNAc...) asparagine) is linked at Asn-65. 9 disulfides stabilise this stretch: Cys-83-Cys-90, Cys-117-Cys-125, Cys-239-Cys-341, Cys-255-Cys-292, Cys-310-Cys-328, Cys-439-Cys-456, Cys-445-Cys-479, Cys-448-Cys-465, and Cys-459-Cys-471. A glycan (N-linked (GlcNAc...) asparagine) is linked at Asn-241. Residues 438 to 480 (TCAHHESCTDCQVSVDPLCQWCHPTQSCTTSSRCSGPLTTQCP) form the PSI 1 domain. Asn-494 is a glycosylation site (N-linked (GlcNAc...) asparagine). The cysteines at positions 516 and 538 are disulfide-linked. N-linked (GlcNAc...) asparagine glycosylation is present at Asn-566. One can recognise a PSI 2 domain in the interval 571–608 (DCAGYSTCSTCMSSEFGCQWCSHKCSSSCGSASAKACV). N-linked (GlcNAc...) asparagine glycans are attached at residues Asn-670 and Asn-693. One can recognise a PSI 3 domain in the interval 698–739 (SCSNLAADCSSCLALSPSLSCGWCNRKCSHECHESKATAVCD). 3 consecutive IPT/TIG domains span residues 741-829 (PKID…FSFV), 831-916 (VSIF…FEYR), and 919-1006 (PSVN…FLMD). Residues Asn-855, Asn-877, Asn-975, and Asn-1007 are each glycosylated (N-linked (GlcNAc...) asparagine). Residues 1131–1151 (FLILGLLLFTVITLIVMCLIF) form a helical membrane-spanning segment. A coiled-coil region spans residues 1150–1188 (IFKRRRQEREKEYRKIQLQMENLENNVRKECKQAFAELQ). Over 1152–1764 (KRRRQEREKE…LHVCLETDNH (613 aa)) the chain is Cytoplasmic.

This sequence belongs to the plexin family. Interacts with mab-20.

Its subcellular location is the cell membrane. In terms of biological role, involved as a receptor for mab-20/sema-2a in the formation or stabilization of cell-cell contacts at several stages of epithelial morphogenesis. In early embryonic development, required for proper ventral closure of the epidermis. During male tail morphogenesis, involved in precursor cell sorting and in the formation of distinct sensory rays. Involved in axon guidance of SDQL neurons during neurogenesis. The chain is Plexin-2 (plx-2) from Caenorhabditis briggsae.